A 246-amino-acid polypeptide reads, in one-letter code: Probable transcriptional regulatory protein CLD_1467 (246 aa).

Belongs to the TACO1 family.

It localises to the cytoplasm. This chain is Probable transcriptional regulatory protein CLD_1467, found in Clostridium botulinum (strain Okra / Type B1).